Reading from the N-terminus, the 358-residue chain is MGILDIVPTGVITGDNVLKLFTYAREHGFAIPAINVTSSSTAIAALEAAREARSPIILQTSNGGAHFFAGKESSNEGQKASIAGSIAAAHYIRSIAPFFGVPVVMHSDHCAKKLLPWMDGMFEADEAYFKIHGEPLFSSHMLDLSEEPKKENIAQVKEYCKRAVPMKIWIEMEIGITGGEEDGVDNSHVSHTELYTQPEDIWDVYRELSSVTPYFSIAAAFGNVHGVYKPGNVKLQPALLGQHQAYVKEQLKTTNDKPVFFVFHGGSGSSVNEFRTGIKCGVVKVNIDTDTQFAYVEGVRDYVLKYKDYLMTPVGNPEGADKPNKKKFDPRVWIHEGEKTMTKRVLTALEDFYTVNTL.

D-glyceraldehyde 3-phosphate is bound at residue S61. D108 serves as the catalytic Proton donor. Zn(2+) contacts are provided by H109, D143, E173, and H225. Position 226 (G226) interacts with dihydroxyacetone phosphate. H264 is a binding site for Zn(2+). Residues 265–267 (GGS) and 286–289 (NIDT) each bind dihydroxyacetone phosphate. 4 positions are modified to phosphothreonine: T289, T312, T340, and T342.

Belongs to the class II fructose-bisphosphate aldolase family. Homodimer. Zn(2+) is required as a cofactor.

The catalysed reaction is beta-D-fructose 1,6-bisphosphate = D-glyceraldehyde 3-phosphate + dihydroxyacetone phosphate. It functions in the pathway carbohydrate degradation; glycolysis; D-glyceraldehyde 3-phosphate and glycerone phosphate from D-glucose: step 4/4. In terms of biological role, catalyzes the aldol condensation of dihydroxyacetone phosphate (DHAP or glycerone-phosphate) with glyceraldehyde 3-phosphate (G3P) to form fructose 1,6-bisphosphate (FBP) in gluconeogenesis and the reverse reaction in glycolysis. The protein is Fructose-bisphosphate aldolase (fba1) of Schizosaccharomyces pombe (strain 972 / ATCC 24843) (Fission yeast).